A 239-amino-acid chain; its full sequence is Small ribosomal subunit protein uS3c (239 aa).

A KH type-2 domain is found at 43 to 139; it reads IKNYIQKNRK…RLNISIEKVK (97 aa). The segment at 50 to 80 is disordered; sequence NRKKGSNRKIESDSSSEVITHNRKTDSGSSS.

It belongs to the universal ribosomal protein uS3 family. Part of the 30S ribosomal subunit.

It is found in the plastid. The protein localises to the chloroplast. The sequence is that of Small ribosomal subunit protein uS3c (rps3) from Agrostis stolonifera (Creeping bentgrass).